The primary structure comprises 779 residues: uncharacterized protein (779 aa).

[4Fe-4S] cluster-binding residues include Cys-72 and Cys-75.

It belongs to the prokaryotic molybdopterin-containing oxidoreductase family. The cofactor is [4Fe-4S] cluster. Mo-bis(molybdopterin guanine dinucleotide) is required as a cofactor.

This is an uncharacterized protein from Mycobacterium bovis (strain ATCC BAA-935 / AF2122/97).